Here is a 130-residue protein sequence, read N- to C-terminus: Histone H2A type 1-E (130 aa).

The tract at residues 1-22 is disordered; it reads MSGRGKQGGKARAKAKTRSSRA. Position 2 is an N-acetylserine (S2). S2 bears the Phosphoserine; by RPS6KA5 mark. At R4 the chain carries Citrulline; alternate. The residue at position 4 (R4) is a Symmetric dimethylarginine; by PRMT5; alternate. N6-(2-hydroxyisobutyryl)lysine; alternate occurs at positions 6 and 10. K6 is modified (N6-acetyllysine; alternate). Over residues 7 to 19 the composition is skewed to basic residues; that stretch reads QGGKARAKAKTRS. K10 carries the post-translational modification N6-lactoyllysine; alternate. N6-succinyllysine; alternate is present on K10. Glycyl lysine isopeptide (Lys-Gly) (interchain with G-Cter in ubiquitin) cross-links involve residues K14 and K16. K37 carries the post-translational modification N6-(2-hydroxyisobutyryl)lysine; alternate. K37 is subject to N6-(beta-hydroxybutyryl)lysine; alternate. N6-crotonyllysine; alternate is present on K37. 2 positions are modified to N6-(2-hydroxyisobutyryl)lysine: K75 and K76. Position 96 is an N6-(2-hydroxyisobutyryl)lysine; alternate (K96). K96 carries the N6-succinyllysine; alternate modification. K96 carries the post-translational modification N6-glutaryllysine; alternate. Residue Q105 is modified to N5-methylglutamine. The residue at position 119 (K119) is an N6-(2-hydroxyisobutyryl)lysine; alternate. N6-crotonyllysine; alternate is present on residues K119 and K120. Residues K119 and K120 each carry the N6-glutaryllysine; alternate modification. K120 participates in a covalent cross-link: Glycyl lysine isopeptide (Lys-Gly) (interchain with G-Cter in ubiquitin); alternate. At T121 the chain carries Phosphothreonine; by DCAF1. K126 carries the post-translational modification N6-crotonyllysine; alternate. K126 bears the N6-glutaryllysine; alternate mark.

Belongs to the histone H2A family. As to quaternary structure, the nucleosome is a histone octamer containing two molecules each of H2A, H2B, H3 and H4 assembled in one H3-H4 heterotetramer and two H2A-H2B heterodimers. The octamer wraps approximately 147 bp of DNA. In terms of processing, deiminated on Arg-4 in granulocytes upon calcium entry. Monoubiquitination of Lys-120 (H2AK119Ub) by RING1, TRIM37 and RNF2/RING2 complex gives a specific tag for epigenetic transcriptional repression and participates in X chromosome inactivation of female mammals. It is involved in the initiation of both imprinted and random X inactivation. Ubiquitinated H2A is enriched in inactive X chromosome chromatin. Ubiquitination of H2A functions downstream of methylation of 'Lys-27' of histone H3 (H3K27me). H2AK119Ub by RNF2/RING2 can also be induced by ultraviolet and may be involved in DNA repair. Following DNA double-strand breaks (DSBs), it is ubiquitinated through 'Lys-63' linkage of ubiquitin moieties by the E2 ligase UBE2N and the E3 ligases RNF8 and RNF168, leading to the recruitment of repair proteins to sites of DNA damage. Ubiquitination at Lys-14 and Lys-16 (H2AK13Ub and H2AK15Ub, respectively) in response to DNA damage is initiated by RNF168 that mediates monoubiquitination at these 2 sites, and 'Lys-63'-linked ubiquitin are then conjugated to monoubiquitin; RNF8 is able to extend 'Lys-63'-linked ubiquitin chains in vitro. H2AK119Ub and ionizing radiation-induced 'Lys-63'-linked ubiquitination (H2AK13Ub and H2AK15Ub) are distinct events. Post-translationally, phosphorylation on Ser-2 (H2AS1ph) is enhanced during mitosis. Phosphorylation on Ser-2 by RPS6KA5/MSK1 directly represses transcription. Acetylation of H3 inhibits Ser-2 phosphorylation by RPS6KA5/MSK1. Phosphorylation at Thr-121 (H2AT120ph) by DCAF1 is present in the regulatory region of many tumor suppresor genes and down-regulates their transcription. In terms of processing, symmetric dimethylation on Arg-4 by the PRDM1/PRMT5 complex may play a crucial role in the germ-cell lineage. Glutamine methylation at Gln-105 (H2AQ104me) by FBL is specifically dedicated to polymerase I. It is present at 35S ribosomal DNA locus and impairs binding of the FACT complex. Post-translationally, crotonylation (Kcr) is specifically present in male germ cells and marks testis-specific genes in post-meiotic cells, including X-linked genes that escape sex chromosome inactivation in haploid cells. Crotonylation marks active promoters and enhancers and confers resistance to transcriptional repressors. It is also associated with post-meiotically activated genes on autosomes. In terms of processing, lactylated in macrophages by EP300/P300 by using lactoyl-CoA directly derived from endogenous or exogenous lactate, leading to stimulates gene transcription.

The protein resides in the nucleus. Its subcellular location is the chromosome. In terms of biological role, core component of nucleosome. Nucleosomes wrap and compact DNA into chromatin, limiting DNA accessibility to the cellular machineries which require DNA as a template. Histones thereby play a central role in transcription regulation, DNA repair, DNA replication and chromosomal stability. DNA accessibility is regulated via a complex set of post-translational modifications of histones, also called histone code, and nucleosome remodeling. This is Histone H2A type 1-E from Rattus norvegicus (Rat).